The chain runs to 683 residues: Amphiphysin (683 aa).

Coiled coils occupy residues 10–83 and 144–191; these read AKNV…SLHE and DYDS…QEEL. Residues 24 to 240 enclose the BAR domain; that stretch reads VLQKLGKADE…MTKLGDQHAD (217 aa). 3 disordered regions span residues 244–311, 421–443, and 455–599; these read SIQG…KVTP, AETE…AAAP, and EPKE…ASLS. Residue S252 is modified to Phosphoserine. The residue at position 260 (T260) is a Phosphothreonine. A compositionally biased stretch (pro residues) spans 261 to 274; it reads PSPPEEASPLPSPT. S262, S268, S272, and S276 each carry phosphoserine. A Phosphothreonine modification is found at T280. Low complexity-rich tracts occupy residues 424–443 and 468–477; these read EQAL…AAAP and AGETVGTEGS. S496 is subject to Phosphoserine. Basic and acidic residues predominate over residues 539–559; sequence SNHEGEEHQETTTGTETREAT. Low complexity predominate over residues 585-596; that stretch reads AATPAPAGAVDA. Residues 610–683 enclose the SH3 domain; it reads GFLYKVETLH…FPENFTRHLE (74 aa). Residue S626 is modified to Phosphoserine.

As to quaternary structure, heterodimer with BIN1. Binds SH3GLB1. Interacts with REPS1 and SGIP1. Binds AP2A2. Interacts with AP2B1. Interacts with DNM1 and SYNJ1.

The protein localises to the cytoplasmic vesicle. Its subcellular location is the secretory vesicle. It is found in the synaptic vesicle membrane. It localises to the cytoplasm. The protein resides in the cytoskeleton. Functionally, may participate in mechanisms of regulated exocytosis in synapses and certain endocrine cell types. May control the properties of the membrane associated cytoskeleton. The polypeptide is Amphiphysin (Amph) (Rattus norvegicus (Rat)).